The chain runs to 196 residues: Small ribosomal subunit protein uS4c (196 aa).

A disordered region spans residues 15-43 (LGALPGLTRKTPKSGSNQKKKFHSGKKEQ). The region spanning 89–150 (MRLDNILFRL…NQRSKRLVQN (62 aa)) is the S4 RNA-binding domain.

The protein belongs to the universal ribosomal protein uS4 family. In terms of assembly, part of the 30S ribosomal subunit. Contacts protein S5. The interaction surface between S4 and S5 is involved in control of translational fidelity.

The protein localises to the plastid. It is found in the chloroplast. Functionally, one of the primary rRNA binding proteins, it binds directly to 16S rRNA where it nucleates assembly of the body of the 30S subunit. Its function is as follows. With S5 and S12 plays an important role in translational accuracy. In Melinis repens (Red Natal grass), this protein is Small ribosomal subunit protein uS4c (rps4).